Here is a 193-residue protein sequence, read N- to C-terminus: UMP-CMP kinase (193 aa).

13–18 contributes to the ATP binding site; the sequence is GAGKGT. The interval 33-63 is NMP; that stretch reads SAGDLLRDERKKPDSQYGELIESYIRDGKIV. Residues Arg-39, 61–63, and 93–96 contribute to the a ribonucleoside 5'-phosphate site; these read KIV and GFPR. A CMP-binding site is contributed by Asn-100. The tract at residues 133–143 is LID; that stretch reads ERGKSSGRSDD. ATP is bound at residue Arg-134. Residues Arg-140 and Arg-151 each coordinate a ribonucleoside 5'-phosphate. Lys-179 is a binding site for ATP.

The protein belongs to the adenylate kinase family. UMP-CMP kinase subfamily. In terms of assembly, monomer. Mg(2+) is required as a cofactor.

The protein localises to the nucleus. It is found in the cytoplasm. It carries out the reaction CMP + ATP = CDP + ADP. The catalysed reaction is dCMP + ATP = dCDP + ADP. It catalyses the reaction UMP + ATP = UDP + ADP. The enzyme catalyses a 2'-deoxyribonucleoside 5'-diphosphate + ATP = a 2'-deoxyribonucleoside 5'-triphosphate + ADP. It carries out the reaction a ribonucleoside 5'-diphosphate + ATP = a ribonucleoside 5'-triphosphate + ADP. Functionally, catalyzes the phosphorylation of pyrimidine nucleoside monophosphates at the expense of ATP. Plays an important role in de novo pyrimidine nucleotide biosynthesis. Has preference for UMP and CMP as phosphate acceptors. Also displays broad nucleoside diphosphate kinase activity. This is UMP-CMP kinase (cmpk1) from Xenopus laevis (African clawed frog).